A 341-amino-acid polypeptide reads, in one-letter code: Outer membrane protein U (341 aa).

The first 21 residues, 1–21, serve as a signal peptide directing secretion; that stretch reads MNKTLIALAVSAAAVATGAYA.

It belongs to the Gram-negative porin family. In terms of assembly, homotrimer.

It localises to the cell outer membrane. Forms pores that allow passive diffusion of small molecules across the outer membrane. The sequence is that of Outer membrane protein U (ompU) from Vibrio cholerae serotype O1 (strain ATCC 39315 / El Tor Inaba N16961).